A 343-amino-acid polypeptide reads, in one-letter code: MPAKVLINGYGSIGKRVADAVSMQDDMEVIGVTKTKPDFEARLAVEKGYKLFVAIPDNERVKLFEDAGIPVEGTILDIIEDADIVVDGAPKKIGKQNLENIYKPHKVKAILQGGEKAKDVEDNFNALWSYNRCYGKDYVRVVSCNTTGLCRILYAINSIADIKKARIVLVRRAADPNDDKTGPVNAITPNPVTVPSHHGPDVVSVVPEFEGKILTSAVIVPTTLMHMHTLMVEVDGDVSRDDILEAIKKTPRIITVRAEDGFSSTAKIIEYGRDLGRLRYDINELVVWEESINVLENEIFLMQAVHQESIVIPENIDCIRAMLQMEEDNFKSIEKTNKAMGIQ.

NAD(+) contacts are provided by residues 12-13 (SI) and G114. A D-glyceraldehyde 3-phosphate-binding site is contributed by 143 to 145 (SCN). C144 acts as the Nucleophile in catalysis. R172 contacts NAD(+). Residue 198–199 (HG) participates in D-glyceraldehyde 3-phosphate binding. NAD(+) is bound at residue Q307.

The protein belongs to the glyceraldehyde-3-phosphate dehydrogenase family. Homotetramer.

The protein resides in the cytoplasm. It catalyses the reaction D-glyceraldehyde 3-phosphate + phosphate + NADP(+) = (2R)-3-phospho-glyceroyl phosphate + NADPH + H(+). The catalysed reaction is D-glyceraldehyde 3-phosphate + phosphate + NAD(+) = (2R)-3-phospho-glyceroyl phosphate + NADH + H(+). It participates in carbohydrate degradation; glycolysis; pyruvate from D-glyceraldehyde 3-phosphate: step 1/5. The sequence is that of Glyceraldehyde-3-phosphate dehydrogenase (gap) from Methanocaldococcus jannaschii (strain ATCC 43067 / DSM 2661 / JAL-1 / JCM 10045 / NBRC 100440) (Methanococcus jannaschii).